Reading from the N-terminus, the 147-residue chain is uncharacterized protein (147 aa).

This is an uncharacterized protein from Mycoplasma pneumoniae (strain ATCC 29342 / M129 / Subtype 1) (Mycoplasmoides pneumoniae).